A 565-amino-acid polypeptide reads, in one-letter code: Probable protease Gilli_2517 (565 aa).

Probably a dedicated protease for substrate gasdermin bGSDM; cleaves the bGSDM precursor, releasing the pore-forming moiety, which integrates into the membrane and triggers cell death. Involved in defense against bacteriophages. Expression of bGSDM and this neighboring protease is not toxic in E.coli. This Gillisia limnaea (strain DSM 15749 / LMG 21470 / R-8282) protein is Probable protease Gilli_2517.